Reading from the N-terminus, the 155-residue chain is U4/U6.U5 small nuclear ribonucleoprotein 27 kDa protein (155 aa).

Basic residues-rich tracts occupy residues 1 to 31 (MGRS…RERS) and 39 to 59 (RRSR…RHRS). The segment at 1–97 (MGRSRSRSPR…ITEEDLEGKT (97 aa)) is disordered. S61 and S65 each carry phosphoserine. Positions 66–97 (RLKERRDEEKKETKETKSKERQITEEDLEGKT) are enriched in basic and acidic residues. A phosphoserine mark is found at S111, S114, and S132.

It belongs to the SNUT3 family. In terms of assembly, part of a tri-snRNP complex. Post-translationally, phosphorylated in vitro by snRNP-associated protein kinase.

It is found in the nucleus. In terms of biological role, may play a role in mRNA splicing. The polypeptide is U4/U6.U5 small nuclear ribonucleoprotein 27 kDa protein (SNRNP27) (Homo sapiens (Human)).